Consider the following 478-residue polypeptide: Protein nucleotidyltransferase YdiU (478 aa).

Gly-84, Gly-86, Arg-87, Lys-107, Asp-119, Gly-120, Arg-170, and Arg-177 together coordinate ATP. The active-site Proton acceptor is the Asp-246. 2 residues coordinate Mg(2+): Asn-247 and Asp-256. Asp-256 contributes to the ATP binding site.

This sequence belongs to the SELO family. Requires Mg(2+) as cofactor. Mn(2+) is required as a cofactor.

The catalysed reaction is L-seryl-[protein] + ATP = 3-O-(5'-adenylyl)-L-seryl-[protein] + diphosphate. The enzyme catalyses L-threonyl-[protein] + ATP = 3-O-(5'-adenylyl)-L-threonyl-[protein] + diphosphate. It catalyses the reaction L-tyrosyl-[protein] + ATP = O-(5'-adenylyl)-L-tyrosyl-[protein] + diphosphate. It carries out the reaction L-histidyl-[protein] + UTP = N(tele)-(5'-uridylyl)-L-histidyl-[protein] + diphosphate. The catalysed reaction is L-seryl-[protein] + UTP = O-(5'-uridylyl)-L-seryl-[protein] + diphosphate. The enzyme catalyses L-tyrosyl-[protein] + UTP = O-(5'-uridylyl)-L-tyrosyl-[protein] + diphosphate. In terms of biological role, nucleotidyltransferase involved in the post-translational modification of proteins. It can catalyze the addition of adenosine monophosphate (AMP) or uridine monophosphate (UMP) to a protein, resulting in modifications known as AMPylation and UMPylation. This Escherichia coli O127:H6 (strain E2348/69 / EPEC) protein is Protein nucleotidyltransferase YdiU.